Here is a 1056-residue protein sequence, read N- to C-terminus: 120.7 kDa protein in NOF-FB transposable element (1056 aa).

Residues 716 to 749 (KTIKPTEGNDAEDNDTDDENKEMDLSEQPKEKPR) are disordered. Acidic residues predominate over residues 724–736 (NDAEDNDTDDENK). Basic and acidic residues predominate over residues 737–749 (EMDLSEQPKEKPR).

The protein resides in the nucleus. Its function is as follows. May be involved in the transposition of NOF-FB and other FB elements. The protein is 120.7 kDa protein in NOF-FB transposable element (NOF) of Drosophila melanogaster (Fruit fly).